The primary structure comprises 138 residues: ATP synthase epsilon chain (138 aa).

Belongs to the ATPase epsilon chain family. F-type ATPases have 2 components, CF(1) - the catalytic core - and CF(0) - the membrane proton channel. CF(1) has five subunits: alpha(3), beta(3), gamma(1), delta(1), epsilon(1). CF(0) has three main subunits: a, b and c.

It is found in the cell inner membrane. In terms of biological role, produces ATP from ADP in the presence of a proton gradient across the membrane. This chain is ATP synthase epsilon chain, found in Geobacter sp. (strain M21).